A 197-amino-acid polypeptide reads, in one-letter code: MAVSPKINRREHILQCLATMLETNPGQRITTAKLAAEVGVSEAALYRHFPSKARMFEGLIDFIEESLLSRINLIMTEEKDTMKRCQLLLQLLLIFSERNPGISRVLNGDALLGENERLRSRVSLIFSKIETHLKQILREKTLREGKGFNLDEAILANLLLAIAEGRIAQFVRSEFKQKPTEHFDQQWIFIQQQLLQS.

The HTH tetR-type domain maps to 7–67 (INRREHILQC…GLIDFIEESL (61 aa)). Positions 30-49 (TTAKLAAEVGVSEAALYRHF) form a DNA-binding region, H-T-H motif.

This sequence belongs to the nucleoid occlusion factor SlmA family. Homodimer. Interacts with FtsZ.

The protein localises to the cytoplasm. It is found in the nucleoid. In terms of biological role, required for nucleoid occlusion (NO) phenomenon, which prevents Z-ring formation and cell division over the nucleoid. Acts as a DNA-associated cell division inhibitor that binds simultaneously chromosomal DNA and FtsZ, and disrupts the assembly of FtsZ polymers. SlmA-DNA-binding sequences (SBS) are dispersed on non-Ter regions of the chromosome, preventing FtsZ polymerization at these regions. In Shewanella sediminis (strain HAW-EB3), this protein is Nucleoid occlusion factor SlmA.